The chain runs to 549 residues: Glucose-6-phosphate isomerase (549 aa).

Catalysis depends on E355, which acts as the Proton donor. Residues H386 and K514 contribute to the active site.

It belongs to the GPI family.

Its subcellular location is the cytoplasm. The enzyme catalyses alpha-D-glucose 6-phosphate = beta-D-fructose 6-phosphate. Its pathway is carbohydrate biosynthesis; gluconeogenesis. The protein operates within carbohydrate degradation; glycolysis; D-glyceraldehyde 3-phosphate and glycerone phosphate from D-glucose: step 2/4. In terms of biological role, catalyzes the reversible isomerization of glucose-6-phosphate to fructose-6-phosphate. The sequence is that of Glucose-6-phosphate isomerase from Salmonella gallinarum (strain 287/91 / NCTC 13346).